Consider the following 843-residue polypeptide: Vacuolar membrane protease (843 aa).

Residues 1–16 (MTNSRRHIFERICAKA) are Cytoplasmic-facing. The chain crosses the membrane as a helical span at residues 17 to 37 (FQSSLTCSIFGFTVLLILYLL). The Vacuolar segment spans residues 38-347 (DWKRIAQVPG…LAFGKYWQLN (310 aa)). N-linked (GlcNAc...) asparagine glycans are attached at residues Asn96, Asn109, and Asn117. Zn(2+) is bound by residues His147 and Asp159. Catalysis depends on Glu191, which acts as the Proton acceptor. Glu192 serves as a coordination point for Zn(2+). Asn209 carries N-linked (GlcNAc...) asparagine glycosylation. Residue Glu217 coordinates Zn(2+). N-linked (GlcNAc...) asparagine glycosylation occurs at Asn275. Residue His292 coordinates Zn(2+). A glycan (N-linked (GlcNAc...) asparagine) is linked at Asn322. A helical membrane pass occupies residues 348 to 368 (LPIYQVLNIIFAVICPIVLLL). The Cytoplasmic segment spans residues 369-386 (TLIRFPSLYEQLKKPRYT). A helical transmembrane segment spans residues 387 to 407 (VCFVVSCIFVSIFDTLTVLLL). The Vacuolar portion of the chain corresponds to 408 to 417 (TWINPYVINS). Residues 418–438 (HTGLILALFYLTNLIALAFSF) form a helical membrane-spanning segment. Residues 439–456 (RAAATHSKLSSEDLSSIE) are Cytoplasmic-facing. A helical membrane pass occupies residues 457 to 477 (IVFIWYAQILWYLVFIVSVIL). Over 478-484 (SIYFQLG) the chain is Vacuolar. A helical transmembrane segment spans residues 485-505 (STYWVTLSYLCTFTCCIMTII). Residues 506 to 566 (RINYFVDNVV…NRAHVKLIDN (61 aa)) are Cytoplasmic-facing. The helical transmembrane segment at 567 to 587 (IWTVIYFIFNVPFPVFLCYDI) threads the bilayer. At 588 to 608 (LVETILPAGSQTLTDSVFSSK) the chain is on the vacuolar side. Residues 609–629 (LYKLVIFVVFLSLVNSGPFIF) form a helical membrane-spanning segment. Over 630–636 (RALSKKS) the chain is Cytoplasmic. Residues 637–657 (LAVLTMLWITLFVQALSVNPF) traverse the membrane as a helical segment. Over 658 to 843 (TESAPLKLSF…LLKVKSSIVI (186 aa)) the chain is Vacuolar. Residues Asn677, Asn703, Asn707, Asn754, and Asn788 are each glycosylated (N-linked (GlcNAc...) asparagine).

This sequence belongs to the peptidase M28 family. The cofactor is Zn(2+).

The protein resides in the membrane. It localises to the vacuole membrane. Functionally, may be involved in vacuolar sorting and osmoregulation. The chain is Vacuolar membrane protease from Schizosaccharomyces pombe (strain 972 / ATCC 24843) (Fission yeast).